A 663-amino-acid polypeptide reads, in one-letter code: Dual specificity protein phosphatase 8 (663 aa).

One can recognise a Rhodanese domain in the interval 23–138; sequence GPGGPLVIDS…FSSCFPGLCE (116 aa). The region spanning 160–302 is the Tyrosine-protein phosphatase domain; the sequence is GLTRILPHLY…LLEYERSLKL (143 aa). Catalysis depends on Cys-246, which acts as the Phosphocysteine intermediate. Disordered regions lie at residues 313–367 and 404–624; these read LGTP…STAP and YAPS…FKRR. Low complexity-rich tracts occupy residues 334–353, 427–448, and 546–557; these read STSE…REGS, LDSP…PDSV, and SAGAPGPGNSSS. A compositionally biased stretch (gly residues) spans 558-577; sequence SGGGGGGGGGGGGGGGGGGS. The span at 578-600 shows a compositional bias: low complexity; the sequence is SSSNSSSSSSSSSSSSSSSSSSS.

This sequence belongs to the protein-tyrosine phosphatase family. Non-receptor class dual specificity subfamily. Monomer. As to expression, expressed predominantly in brain and lung.

Its subcellular location is the cytoplasm. It is found in the nucleus. The enzyme catalyses O-phospho-L-tyrosyl-[protein] + H2O = L-tyrosyl-[protein] + phosphate. It catalyses the reaction O-phospho-L-seryl-[protein] + H2O = L-seryl-[protein] + phosphate. The catalysed reaction is O-phospho-L-threonyl-[protein] + H2O = L-threonyl-[protein] + phosphate. In terms of biological role, has phosphatase activity with synthetic phosphatase substrates and negatively regulates mitogen-activated protein kinase activity, presumably by catalysing their dephosphorylation. Expected to display protein phosphatase activity toward phosphotyrosine, phosphoserine and phosphothreonine residues. This chain is Dual specificity protein phosphatase 8 (Dusp8), found in Mus musculus (Mouse).